Here is a 98-residue protein sequence, read N- to C-terminus: Large ribosomal subunit protein bL21 (98 aa).

This sequence belongs to the bacterial ribosomal protein bL21 family. In terms of assembly, part of the 50S ribosomal subunit. Contacts protein L20.

In terms of biological role, this protein binds to 23S rRNA in the presence of protein L20. This Chloroherpeton thalassium (strain ATCC 35110 / GB-78) protein is Large ribosomal subunit protein bL21.